The primary structure comprises 229 residues: Orotidine 5'-phosphate decarboxylase (229 aa).

Residues Asp-10, Lys-32, 59–68 (DLKFHDIPNT), Thr-119, Arg-180, Gln-189, Gly-209, and Arg-210 contribute to the substrate site. Lys-61 acts as the Proton donor in catalysis.

Belongs to the OMP decarboxylase family. Type 1 subfamily. Homodimer.

It carries out the reaction orotidine 5'-phosphate + H(+) = UMP + CO2. It functions in the pathway pyrimidine metabolism; UMP biosynthesis via de novo pathway; UMP from orotate: step 2/2. In terms of biological role, catalyzes the decarboxylation of orotidine 5'-monophosphate (OMP) to uridine 5'-monophosphate (UMP). In Legionella pneumophila (strain Paris), this protein is Orotidine 5'-phosphate decarboxylase.